Here is a 554-residue protein sequence, read N- to C-terminus: Chaperonin GroEL (554 aa).

Residues 29-32, lysine 50, 86-90, glycine 414, and aspartate 495 contribute to the ATP site; these read TLGP and DGTTT.

This sequence belongs to the chaperonin (HSP60) family. In terms of assembly, forms a cylinder of 14 subunits composed of two heptameric rings stacked back-to-back. Interacts with the co-chaperonin GroES.

Its subcellular location is the cytoplasm. It carries out the reaction ATP + H2O + a folded polypeptide = ADP + phosphate + an unfolded polypeptide.. Its function is as follows. Together with its co-chaperonin GroES, plays an essential role in assisting protein folding. The GroEL-GroES system forms a nano-cage that allows encapsulation of the non-native substrate proteins and provides a physical environment optimized to promote and accelerate protein folding. This chain is Chaperonin GroEL, found in Pelagibacter ubique (strain HTCC1062).